Here is a 174-residue protein sequence, read N- to C-terminus: uncharacterized protein (174 aa).

This is an uncharacterized protein from Saccharomyces cerevisiae (strain ATCC 204508 / S288c) (Baker's yeast).